A 216-amino-acid chain; its full sequence is Probable transaldolase (216 aa).

Residue Lys83 is the Schiff-base intermediate with substrate of the active site.

This sequence belongs to the transaldolase family. Type 3B subfamily.

It is found in the cytoplasm. It catalyses the reaction D-sedoheptulose 7-phosphate + D-glyceraldehyde 3-phosphate = D-erythrose 4-phosphate + beta-D-fructose 6-phosphate. It participates in carbohydrate degradation; pentose phosphate pathway; D-glyceraldehyde 3-phosphate and beta-D-fructose 6-phosphate from D-ribose 5-phosphate and D-xylulose 5-phosphate (non-oxidative stage): step 2/3. In terms of biological role, transaldolase is important for the balance of metabolites in the pentose-phosphate pathway. This Clostridioides difficile (strain 630) (Peptoclostridium difficile) protein is Probable transaldolase.